A 492-amino-acid chain; its full sequence is Bifunctional shikimate kinase/3-dehydroquinate synthase (492 aa).

Residues 1–161 (MRIFLVGMMG…TALVVLEALD (161 aa)) are shikimate kinase. An ATP-binding site is contributed by 10 to 15 (GSGKST). Mg(2+) is bound at residue Ser-14. Asp-32, Arg-56, and Gly-78 together coordinate substrate. ATP is bound at residue Arg-114. A substrate-binding site is contributed by Arg-131. The segment at 162–492 (EKEISTIEKP…DPLELLEVVD (331 aa)) is 3-dehydroquinate synthase.

The protein in the N-terminal section; belongs to the shikimate kinase family. This sequence in the C-terminal section; belongs to the sugar phosphate cyclases superfamily. Dehydroquinate synthase family. It depends on Mg(2+) as a cofactor. Requires NAD(+) as cofactor. A divalent metal cation serves as cofactor.

Its subcellular location is the cytoplasm. The catalysed reaction is 7-phospho-2-dehydro-3-deoxy-D-arabino-heptonate = 3-dehydroquinate + phosphate. It carries out the reaction shikimate + ATP = 3-phosphoshikimate + ADP + H(+). The protein operates within metabolic intermediate biosynthesis; chorismate biosynthesis; chorismate from D-erythrose 4-phosphate and phosphoenolpyruvate: step 2/7. It functions in the pathway metabolic intermediate biosynthesis; chorismate biosynthesis; chorismate from D-erythrose 4-phosphate and phosphoenolpyruvate: step 5/7. Catalyzes the specific phosphorylation of the 3-hydroxyl group of shikimic acid using ATP as a cosubstrate. In Thermotoga maritima (strain ATCC 43589 / DSM 3109 / JCM 10099 / NBRC 100826 / MSB8), this protein is Bifunctional shikimate kinase/3-dehydroquinate synthase (aroKB).